A 101-amino-acid polypeptide reads, in one-letter code: Putative septation protein SpoVG (101 aa).

It belongs to the SpoVG family.

Functionally, could be involved in septation. This is Putative septation protein SpoVG from Anaeromyxobacter dehalogenans (strain 2CP-C).